A 68-amino-acid polypeptide reads, in one-letter code: Large ribosomal subunit protein uL30 (68 aa).

A disordered region spans residues 1-26 (MSAKKSASKATVTVQQIGSPLRREPS). A compositionally biased stretch (polar residues) spans 8-18 (SKATVTVQQIG).

It belongs to the universal ribosomal protein uL30 family. In terms of assembly, part of the 50S ribosomal subunit.

The chain is Large ribosomal subunit protein uL30 from Parvibaculum lavamentivorans (strain DS-1 / DSM 13023 / NCIMB 13966).